The chain runs to 101 residues: Ubiquitin-related modifier 1 homolog (101 aa).

G101 bears the 1-thioglycine mark. Residue G101 forms a Glycyl lysine isopeptide (Gly-Lys) (interchain with K-? in acceptor proteins) linkage.

This sequence belongs to the URM1 family. As to quaternary structure, interacts with cer. Post-translationally, C-terminal thiocarboxylation occurs in 2 steps, it is first acyl-adenylated (-COAMP) via the hesA/moeB/thiF part of the MOCS3 homolog, then thiocarboxylated (-COSH) via the rhodanese domain of the MOCS3 homolog.

The protein resides in the cytoplasm. Its pathway is tRNA modification; 5-methoxycarbonylmethyl-2-thiouridine-tRNA biosynthesis. Functionally, acts as a sulfur carrier required for 2-thiolation of mcm(5)S(2)U at tRNA wobble positions of cytosolic tRNA(Lys), tRNA(Glu) and tRNA(Gln). Serves as sulfur donor in tRNA 2-thiolation reaction by being thiocarboxylated (-COSH) at its C-terminus by MOCS3. The sulfur is then transferred to tRNA to form 2-thiolation of mcm(5)S(2)U. Also acts as a ubiquitin-like protein (UBL) that is covalently conjugated via an isopeptide bond to lysine residues of target proteins such as Prx2/Jafrac1, Ciao1, Eip71CD and GILT1. The thiocarboxylated form serves as substrate for conjugation and oxidative stress specifically induces the formation of UBL-protein conjugates. This is Ubiquitin-related modifier 1 homolog from Drosophila simulans (Fruit fly).